The following is a 271-amino-acid chain: 5-deoxy-glucuronate isomerase (271 aa).

This sequence belongs to the isomerase IolB family.

The catalysed reaction is 5-deoxy-D-glucuronate = 5-dehydro-2-deoxy-D-gluconate. It participates in polyol metabolism; myo-inositol degradation into acetyl-CoA; acetyl-CoA from myo-inositol: step 4/7. Involved in the isomerization of 5-deoxy-glucuronate (5DG) to 5-dehydro-2-deoxy-D-gluconate (DKG or 2-deoxy-5-keto-D-gluconate). This is 5-deoxy-glucuronate isomerase from Bacillus velezensis (strain DSM 23117 / BGSC 10A6 / LMG 26770 / FZB42) (Bacillus amyloliquefaciens subsp. plantarum).